A 254-amino-acid polypeptide reads, in one-letter code: 2-dehydro-3-deoxy-D-gluconate 5-dehydrogenase (254 aa).

An NAD(+)-binding site is contributed by 16–40 (LVTGPGTGIGQGIAKALAGAGADII). Serine 146 contacts substrate. The Proton acceptor role is filled by tyrosine 159.

It belongs to the short-chain dehydrogenases/reductases (SDR) family.

The catalysed reaction is 2-dehydro-3-deoxy-D-gluconate + NAD(+) = 3-deoxy-D-glycero-2,5-hexodiulosonate + NADH + H(+). It participates in glycan metabolism; pectin degradation; 2-dehydro-3-deoxy-D-gluconate from pectin: step 5/5. Functionally, catalyzes the reduction of 2,5-diketo-3-deoxygluconate (DKII or 4,6-dihydroxy-2,5-dioxohexanoate) into 2-keto-3-deoxygluconate (KDG or 2-dehydro-3-deoxygluconate) with a concomitant oxidation of NADH. This Bacillus subtilis (strain 168) protein is 2-dehydro-3-deoxy-D-gluconate 5-dehydrogenase (kduD).